A 579-amino-acid polypeptide reads, in one-letter code: Nuclear receptor subfamily 1 group D member 2 (579 aa).

Residues 1 to 60 (MEVNAGGVIAYISSSSSASSPASCHSEGSENSFQSSSSSVPSSPNSSNSDTNGNPKNGDL) are required for phosphorylation by CSNK1E and cytoplasmic localization. The segment at 1-99 (MEVNAGGVIA…HSGVTKFSGM (99 aa)) is modulating. Over residues 13 to 54 (SSSSSASSPASCHSEGSENSFQSSSSSVPSSPNSSNSDTNGN) the composition is skewed to low complexity. Positions 13 to 61 (SSSSSASSPASCHSEGSENSFQSSSSSVPSSPNSSNSDTNGNPKNGDLA) are disordered. Position 46 is a phosphoserine; by GSK3-beta (Ser-46). Residues 100–176 (VLLCKVCGDV…VGMSRDAVRF (77 aa)) constitute a DNA-binding region (nuclear receptor). 2 NR C4-type zinc fingers span residues 103-123 (CKVC…CEGC) and 140-164 (CLKN…FKKC). Residues Lys-162 and Lys-163 each carry the N6-acetyllysine; by KAT5 modification. Residues 222–250 (PAQEQLRPKPQLEQENIKSSSPPSSDFAK) are disordered. Residues 227-237 (LRPKPQLEQEN) are compositionally biased toward basic and acidic residues. Cystine bridges form between Cys-337–Cys-343 and Cys-374–Cys-384. The 211-residue stretch at 369 to 579 (KNSYLCNTGG…EELLAFKVHP (211 aa)) folds into the NR LBD domain. Cys-384 and His-568 together coordinate heme. Residues 397–579 (SGHEIWEEFS…EELLAFKVHP (183 aa)) form an interaction with ZNHIT1 region.

It belongs to the nuclear hormone receptor family. NR1 subfamily. As to quaternary structure, binds DNA as a monomer or a homodimer. Interacts with NCOA5 coactivator, leading to a strong increase of transcription of target genes. Interacts (via N-terminus) with KAT5. Interacts (via C-terminus) with HDAC1. Interacts with ZNHIT1. Interacts with SIAH2. Deacetylated by HDAC1. Acetylation and deacetylation regulate its transcriptional regulatory activity. Post-translationally, under more reducing intracellular redox conditions, Cys-384 is in its heme-bound state, which is optimal for recruitment of the NCOR1/HDAC3 corepressor complex and repression of target genes. When subjected to oxidative stress conditions, Cys-384 undergoes oxidation to form a disulfide bridge with Cys-374, also triggering a ligand switch that results in release of bound heme and derepression of target genes. In terms of processing, ubiquitinated by SIAH2; leading to proteasomal degradation. Phosphorylated by CSNK1E; phosphorylation enhances its cytoplasmic localization. Widely expressed. Expressed at high levels in the liver, adipose tissue, skeletal muscle and brain. Expression oscillates diurnally in the suprachiasmatic nucleus (SCN) of the hypothalamus as well as in peripheral tissues.

It localises to the nucleus. It is found in the cytoplasm. With respect to regulation, the heme-bound form can bind gaseous signaling molecules such as CO and nitric oxide (NO) and NO can reverse its transcriptional repressor activity. Functionally, transcriptional repressor which coordinates circadian rhythm and metabolic pathways in a heme-dependent manner. Integral component of the complex transcription machinery that governs circadian rhythmicity and forms a critical negative limb of the circadian clock by directly repressing the expression of core clock components BMAL1 and CLOCK. Also regulates genes involved in metabolic functions, including lipid metabolism and the inflammatory response. Acts as a receptor for heme which stimulates its interaction with the NCOR1/HDAC3 corepressor complex, enhancing transcriptional repression. Recognizes two classes of DNA response elements within the promoter of its target genes and can bind to DNA as either monomers or homodimers, depending on the nature of the response element. Binds as a monomer to a response element composed of the consensus half-site motif 5'-[A/G]GGTCA-3' preceded by an A/T-rich 5' sequence (RevRE), or as a homodimer to a direct repeat of the core motif spaced by two nuclegotides (RevDR-2). Acts as a potent competitive repressor of ROR alpha (RORA) function and also negatively regulates the expression of NR1D1. Regulates lipid and energy homeostasis in the skeletal muscle via repression of genes involved in lipid metabolism and myogenesis including: CD36, FABP3, FABP4, UCP3, SCD1 and MSTN. Regulates hepatic lipid metabolism via the repression of APOC3. Represses gene expression at a distance in macrophages by inhibiting the transcription of enhancer-derived RNAs (eRNAs). In addition to its activity as a repressor, can also act as a transcriptional activator. Acts as a transcriptional activator of the sterol regulatory element-binding protein 1 (SREBF1) and the inflammatory mediator interleukin-6 (IL6) in the skeletal muscle. Plays a role in the regulation of circadian sleep/wake cycle; essential for maintaining wakefulness during the dark phase or active period. Key regulator of skeletal muscle mitochondrial function; negatively regulates the skeletal muscle expression of core clock genes and genes involved in mitochondrial biogenesis, fatty acid beta-oxidation and lipid metabolism. May play a role in the circadian control of neutrophilic inflammation in the lung. The protein is Nuclear receptor subfamily 1 group D member 2 of Homo sapiens (Human).